Here is a 531-residue protein sequence, read N- to C-terminus: Probable rhamnogalacturonate lyase A (531 aa).

Residues 1 to 20 form the signal peptide; the sequence is MLSKTSLLSLLSLAAGVVNA. 2 cysteine pairs are disulfide-bonded: cysteine 50–cysteine 93 and cysteine 184–cysteine 193.

Belongs to the polysaccharide lyase 4 family.

It localises to the secreted. It carries out the reaction Endotype eliminative cleavage of L-alpha-rhamnopyranosyl-(1-&gt;4)-alpha-D-galactopyranosyluronic acid bonds of rhamnogalacturonan I domains in ramified hairy regions of pectin leaving L-rhamnopyranose at the reducing end and 4-deoxy-4,5-unsaturated D-galactopyranosyluronic acid at the non-reducing end.. In terms of biological role, pectinolytic enzymes consist of four classes of enzymes: pectin lyase, polygalacturonase, pectin methylesterase and rhamnogalacturonase. Degrades the rhamnogalacturonan I (RG-I) backbone of pectin. This is Probable rhamnogalacturonate lyase A (rglA) from Aspergillus niger (strain ATCC MYA-4892 / CBS 513.88 / FGSC A1513).